The sequence spans 474 residues: ATP synthase subunit beta (474 aa).

153-160 serves as a coordination point for ATP; that stretch reads GGAGVGKT.

It belongs to the ATPase alpha/beta chains family. F-type ATPases have 2 components, CF(1) - the catalytic core - and CF(0) - the membrane proton channel. CF(1) has five subunits: alpha(3), beta(3), gamma(1), delta(1), epsilon(1). CF(0) has three main subunits: a(1), b(2) and c(9-12). The alpha and beta chains form an alternating ring which encloses part of the gamma chain. CF(1) is attached to CF(0) by a central stalk formed by the gamma and epsilon chains, while a peripheral stalk is formed by the delta and b chains.

Its subcellular location is the cell inner membrane. The enzyme catalyses ATP + H2O + 4 H(+)(in) = ADP + phosphate + 5 H(+)(out). Produces ATP from ADP in the presence of a proton gradient across the membrane. The catalytic sites are hosted primarily by the beta subunits. The chain is ATP synthase subunit beta from Neorickettsia sennetsu (strain ATCC VR-367 / Miyayama) (Ehrlichia sennetsu).